The sequence spans 285 residues: GTP-binding protein 8 (285 aa).

Residues 110–283 (RQPEVCFIGR…KCFIADITGS (174 aa)) enclose the EngB-type G domain. GTP contacts are provided by residues 118–125 (GRSNVGKS), 147–151 (GHTKK), 165–168 (DMPG), 227–230 (TKID), and 262–264 (ISA). Ser125 and Thr149 together coordinate Mg(2+).

The protein belongs to the TRAFAC class TrmE-Era-EngA-EngB-Septin-like GTPase superfamily. EngB GTPase family. Mg(2+) is required as a cofactor.

The polypeptide is GTP-binding protein 8 (Gtpbp8) (Rattus norvegicus (Rat)).